The primary structure comprises 631 residues: Dolichyl-diphosphooligosaccharide--protein glycosyltransferase subunit 2 (631 aa).

The N-terminal stretch at 1–22 (MASPGASTVFLLALTILAGTQA) is a signal peptide. Topologically, residues 23–540 (LTPTHYLTKP…REPEKRPPTV (518 aa)) are lumenal. Residue asparagine 106 is glycosylated (N-linked (GlcNAc...) asparagine). Residue lysine 154 forms a Glycyl lysine isopeptide (Lys-Gly) (interchain with G-Cter in ubiquitin) linkage. The helical transmembrane segment at 541-561 (VSNTFTALILSPLLLLFALWI) threads the bilayer. Topologically, residues 562–571 (RIGANVSNFT) are cytoplasmic. The helical transmembrane segment at 572-592 (FAPSTIIFHLGHAAMLGLMYV) threads the bilayer. Topologically, residues 593–596 (YWTQ) are lumenal. Residues 597-617 (LNMFQTLKYLAILGSVTFLAG) traverse the membrane as a helical segment. Topologically, residues 618 to 631 (NRMLAQQAIKRTAH) are cytoplasmic.

Belongs to the SWP1 family. Component of the oligosaccharyltransferase (OST) complex. OST exists in two different complex forms which contain common core subunits RPN1, RPN2, OST48, OST4, DAD1 and TMEM258, either STT3A or STT3B as catalytic subunits, and form-specific accessory subunits. STT3A complex assembly occurs through the formation of 3 subcomplexes. Subcomplex 1 contains RPN1 and TMEM258, subcomplex 2 contains the STT3A-specific subunits STT3A, DC2/OSTC, and KCP2 as well as the core subunit OST4, and subcomplex 3 contains RPN2, DAD1, and OST48. The STT3A complex can form stable complexes with the Sec61 complex or with both the Sec61 and TRAP complexes. Interacts with DDI2. Interacts with TMEM35A/NACHO.

Its subcellular location is the endoplasmic reticulum. The protein resides in the endoplasmic reticulum membrane. It participates in protein modification; protein glycosylation. In terms of biological role, subunit of the oligosaccharyl transferase (OST) complex that catalyzes the initial transfer of a defined glycan (Glc(3)Man(9)GlcNAc(2) in eukaryotes) from the lipid carrier dolichol-pyrophosphate to an asparagine residue within an Asn-X-Ser/Thr consensus motif in nascent polypeptide chains, the first step in protein N-glycosylation. N-glycosylation occurs cotranslationally and the complex associates with the Sec61 complex at the channel-forming translocon complex that mediates protein translocation across the endoplasmic reticulum (ER). All subunits are required for a maximal enzyme activity. This chain is Dolichyl-diphosphooligosaccharide--protein glycosyltransferase subunit 2, found in Canis lupus familiaris (Dog).